The primary structure comprises 1230 residues: Cullin-associated NEDD8-dissociated protein 1 (1230 aa).

An N-acetylalanine modification is found at A2. 12 HEAT repeats span residues 2 to 39 (ASAS…KDSI), 44 to 81 (DSER…KVKE), 83 to 119 (QVET…ELPP), 131 to 165 (CKKI…LSRQ), 171 to 208 (NFHP…SCGN), 210 to 247 (VFVG…QAGH), 248 to 282 (RIGE…FESF), 289 to 366 (EVYP…TRHE), 370 to 407 (EFYK…QTRP), 424 to 467 (PLTM…VLPG), 471 to 510 (QHIP…NHSP), and 515 to 552 (PHVQ…VIRP). K55 carries the post-translational modification N6-acetyllysine. A disordered region spans residues 315–343 (DEDEDENAMDADGGDDDDQGSDDEYSDDG). At S335 the chain carries Phosphoserine. S558 is subject to Phosphoserine. HEAT repeat units lie at residues 563–602 (PYIK…NLGD), 606–643 (SDLP…LKID), 646–683 (PVLG…NYSD), 688–725 (AMID…VYPS), 729–768 (KISG…TGTN), 770–808 (LGYM…ALTR), 809–845 (ACPK…LGEV), 852–889 (SGQL…GNLP), 890–927 (EYLP…GLKP), 928–960 (YVEN…KLTL), 961–998 (IDPE…DHPQ), 1002–1039 (PLLK…NKPS), 1043–1097 (DLLD…DSCL), 1099–1133 (RLDI…LSTL), and 1140–1189 (QRLD…IPEA). The residue at position 971 (K971) is an N6-acetyllysine.

It belongs to the CAND family. As to quaternary structure, interacts with TBP. Part of a complex that contains CUL1 and RBX1. Interacts with unneddylated cullins: interacts with CUL1, CUL2, CUL3, CUL4A, CUL4B and CUL5. Does not bind neddylated CUL1. Interaction with cullins is abolished in presence of COMMD1, which antagonizes with CAND1 for interacting with cullins. Interacts with ERCC6. Interacts with DCUN1D1, DCUN1D2, DCUN1D3, DCUN1D4 and DCUN1D5; these interactions are bridged by cullins and strongly inhibits the neddylation of cullins.

The protein localises to the cytoplasm. It localises to the nucleus. Functionally, key assembly factor of SCF (SKP1-CUL1-F-box protein) E3 ubiquitin ligase complexes that promotes the exchange of the substrate-recognition F-box subunit in SCF complexes, thereby playing a key role in the cellular repertoire of SCF complexes. Acts as a F-box protein exchange factor. The exchange activity of CAND1 is coupled with cycles of neddylation conjugation: in the deneddylated state, cullin-binding CAND1 binds CUL1-RBX1, increasing dissociation of the SCF complex and promoting exchange of the F-box protein. Probably plays a similar role in other cullin-RING E3 ubiquitin ligase complexes. This Pongo abelii (Sumatran orangutan) protein is Cullin-associated NEDD8-dissociated protein 1 (CAND1).